We begin with the raw amino-acid sequence, 625 residues long: Chaperone protein HtpG (625 aa).

The interval 1-337 (MSTNQETRGF…TNDLPLNVSR (337 aa)) is a; substrate-binding. A b region spans residues 338 to 554 (EILQENKITA…NDEMTTQMAK (217 aa)). The c stretch occupies residues 555–625 (LFAAMGQKAP…FIKRMNKLLG (71 aa)).

It belongs to the heat shock protein 90 family. As to quaternary structure, homodimer.

Its subcellular location is the cytoplasm. Molecular chaperone. Has ATPase activity. The polypeptide is Chaperone protein HtpG (Actinobacillus pleuropneumoniae serotype 3 (strain JL03)).